The sequence spans 362 residues: Protein OCA4 (362 aa).

Functionally, required for replication of Brome mosaic virus (BMV). The polypeptide is Protein OCA4 (OCA4) (Saccharomyces cerevisiae (strain ATCC 204508 / S288c) (Baker's yeast)).